The sequence spans 676 residues: Urocanate hydratase (676 aa).

Residues 126 to 127, Gln-204, 251 to 253, Glu-271, 317 to 318, 343 to 347, 354 to 355, and Tyr-403 each bind NAD(+); these read GG, GMS, NV, QTSCH, and YY. Lys-534 carries the post-translational modification N6-succinyllysine. An NAD(+)-binding site is contributed by Gly-594.

Belongs to the urocanase family. Requires NAD(+) as cofactor.

It catalyses the reaction 4-imidazolone-5-propanoate = trans-urocanate + H2O. The protein operates within amino-acid degradation; L-histidine degradation into L-glutamate; N-formimidoyl-L-glutamate from L-histidine: step 2/3. This is Urocanate hydratase (Uroc1) from Mus musculus (Mouse).